The sequence spans 161 residues: MKNILRLTLNGRAREDLVPDNMLLLDYLRETVGLTGTKQGCDGGECGACTVLVDDRPRLACSTLAHQVAGKKVETVESLATQGTLSKLQAAFHEKLGTQCGFCTPGMIMASEALLRKNPSPSRDEIKAALAGNLCRCTGYVRSSKSVETAAAARLCEEGAR.

The region spanning 3–79 is the 2Fe-2S ferredoxin-type domain; sequence NILRLTLNGR…GKKVETVESL (77 aa). Cys-41, Cys-46, Cys-49, Cys-61, Cys-100, Cys-103, Cys-135, and Cys-137 together coordinate [2Fe-2S] cluster.

Heterohexamer of two alpha, two beta and two gamma subunits. [2Fe-2S] cluster serves as cofactor.

It catalyses the reaction oxidized 2[4Fe-4S]-[ferredoxin] + benzoyl-CoA + H2O = 4-hydroxybenzoyl-CoA + reduced 2[4Fe-4S]-[ferredoxin] + 2 H(+). With respect to regulation, inactivated by low concentrations of cyanide in vitro. In terms of biological role, component of a complex that catalyzes the reductive dehydroxylation of 4-hydroxybenzoyl-CoA to benzoyl-CoA. Reaction is not reversible. Is a key enzyme in the anaerobic degradation of phenolic compounds. This chain is 4-hydroxybenzoyl-CoA reductase subunit gamma (hcrC), found in Thauera aromatica.